A 1076-amino-acid chain; its full sequence is Vacuolar membrane protease (1076 aa).

Residues 1–11 (MKCYNPSAFVP) are Cytoplasmic-facing. A helical membrane pass occupies residues 12 to 32 (MAVTLVTVVIYLGVFIPLLII). Residues 33–437 (HETVPSAPDD…TVFAVFRLRT (405 aa)) lie on the Vacuolar side of the membrane. N-linked (GlcNAc...) asparagine glycosylation is found at Asn-50, Asn-99, and Asn-156. Zn(2+) contacts are provided by His-220 and Asp-232. Glu-266 serves as the catalytic Proton acceptor. Zn(2+)-binding residues include Glu-267, Glu-292, and His-364. A helical membrane pass occupies residues 438 to 458 (LFAWSLTLLIASPLILFAVSY). The Cytoplasmic portion of the chain corresponds to 459–491 (LLNRQEKFYFFAGSIKSKNPEDEPISLGGWRGA). The helical transmembrane segment at 492–512 (FRFPITLFITSAITFACASLI) threads the bilayer. Over 513 to 525 (NKINPMIIYSSPY) the chain is Vacuolar. Residues 526–546 (AVWSMSATLFFSVFWFIMAGC) form a helical membrane-spanning segment. Topologically, residues 547–556 (NFVRPSALQR) are cytoplasmic. A helical membrane pass occupies residues 557 to 577 (GYAFMWMFVFGWILLVVATVY). The Vacuolar portion of the chain corresponds to 578–584 (EDRFKIS). Residues 585–605 (GGYLFVFYEAAIFLATLIAIC) traverse the membrane as a helical segment. At 606 to 738 (EQFALPRKST…LPIWTWLVQY (133 aa)) the chain is on the cytoplasmic side. 2 disordered regions span residues 619 to 662 (DSQN…EETV) and 701 to 720 (SYDGPADHDDKKGHKKHPYG). Positions 621 to 632 (QNDHSDNQDHHH) are enriched in basic and acidic residues. Residues 647-660 (PNADDEAAEEDQEE) are compositionally biased toward acidic residues. The helical transmembrane segment at 739–759 (LLVGPFILVILGQVGLFLVAA) threads the bilayer. The Vacuolar portion of the chain corresponds to 760–771 (LHQTGTDGSPLF). The helical transmembrane segment at 772 to 792 (LPYLIVAIFSILLLLPVTPFI) threads the bilayer. Topologically, residues 793 to 799 (HRLTHHM) are cytoplasmic. The chain crosses the membrane as a helical span at residues 800 to 820 (PTFFFLVFIGTLIYNLVAFPF). The Vacuolar portion of the chain corresponds to 821 to 1076 (SPNNRYKAYF…LGLAFLLAYV (256 aa)). Residue Asn-912 is glycosylated (N-linked (GlcNAc...) asparagine).

It belongs to the peptidase M28 family. Zn(2+) serves as cofactor.

It localises to the vacuole membrane. In terms of biological role, may be involved in vacuolar sorting and osmoregulation. This chain is Vacuolar membrane protease, found in Sclerotinia sclerotiorum (strain ATCC 18683 / 1980 / Ss-1) (White mold).